A 187-amino-acid polypeptide reads, in one-letter code: Resolvase OPG149 (187 aa).

The protein belongs to the RuvC family. Poxviruses-type subfamily. The cofactor is Mg(2+).

Plays a role in DNA replication by cleaving viral DNA concatamers to yield unit-length viral genomes. The concatamer junctions contain inverted repeat sequences that can be extruded as cruciforms, yielding Holliday junctions that A22 protein cleaves. The sequence is that of Resolvase OPG149 (OPG149) from Vaccinia virus (strain Western Reserve) (VACV).